Here is a 315-residue protein sequence, read N- to C-terminus: Methionyl-tRNA formyltransferase (315 aa).

An N-terminal domain region spans residues 2–189 (SDSLRIIFAG…LITTLKQLAD (188 aa)). 113-116 (SLLP) serves as a coordination point for (6S)-5,6,7,8-tetrahydrofolate. The segment at 210-315 (KEEARIDWSL…EWFIPGNRLA (106 aa)) is C-terminal domain.

The protein belongs to the Fmt family.

The catalysed reaction is L-methionyl-tRNA(fMet) + (6R)-10-formyltetrahydrofolate = N-formyl-L-methionyl-tRNA(fMet) + (6S)-5,6,7,8-tetrahydrofolate + H(+). Its function is as follows. Attaches a formyl group to the free amino group of methionyl-tRNA(fMet). The formyl group appears to play a dual role in the initiator identity of N-formylmethionyl-tRNA by promoting its recognition by IF2 and preventing the misappropriation of this tRNA by the elongation apparatus. The chain is Methionyl-tRNA formyltransferase from Salmonella choleraesuis (strain SC-B67).